We begin with the raw amino-acid sequence, 141 residues long: Hemoglobin subunit alpha-A (141 aa).

Residues 1-141 (VLSASDKANV…VGTVLTAKYR (141 aa)) enclose the Globin domain. Residue His58 coordinates O2. His87 serves as a coordination point for heme b.

Belongs to the globin family. In terms of assembly, heterotetramer of two alpha chains and two beta chains. Red blood cells.

Its function is as follows. Involved in oxygen transport from the lung to the various peripheral tissues. The protein is Hemoglobin subunit alpha-A (HBAA) of Sturnus vulgaris (Starling).